We begin with the raw amino-acid sequence, 651 residues long: Acetyl-coenzyme A synthetase (651 aa).

Residues 190-193, Thr-309, and Asn-333 each bind CoA; that span reads RGGR. ATP is bound by residues 385–387, 409–414, Asp-498, and Arg-513; these read GEP and DTWWQT. A CoA-binding site is contributed by Ser-521. Arg-524 is a binding site for ATP. Residues Val-535, His-537, and Val-540 each coordinate Mg(2+). Arg-582 contacts CoA. At Lys-607 the chain carries N6-acetyllysine.

Belongs to the ATP-dependent AMP-binding enzyme family. Mg(2+) serves as cofactor. In terms of processing, acetylated. Deacetylation by the SIR2-homolog deacetylase activates the enzyme.

It carries out the reaction acetate + ATP + CoA = acetyl-CoA + AMP + diphosphate. Functionally, catalyzes the conversion of acetate into acetyl-CoA (AcCoA), an essential intermediate at the junction of anabolic and catabolic pathways. AcsA undergoes a two-step reaction. In the first half reaction, AcsA combines acetate with ATP to form acetyl-adenylate (AcAMP) intermediate. In the second half reaction, it can then transfer the acetyl group from AcAMP to the sulfhydryl group of CoA, forming the product AcCoA. The chain is Acetyl-coenzyme A synthetase from Xanthobacter autotrophicus (strain ATCC BAA-1158 / Py2).